Here is a 364-residue protein sequence, read N- to C-terminus: MANKTVLFNKHLEANAKMVDFHGWDMPLNYGSQIEEHHVVRQDAGMFDVSHMTVVDVTGAEACDFLRKLLANDVAKLKVPGKALYGGMLDHNAGVIDDLITYYLSDTHYRIVVNSATREKDLAWITEQVKGYDVTVTERPELAMIAVQGPNAKAKAAAVFTDEQNAAVEGMKPFFGVQSGSLFIATTGYTGEAGYEIIVPEAEAEALWQALLDNGVKPCGLGARDTLRLEAGMNLYGQDMDESVNPLAANMGWTIAWEPEDRDFIGREALAAIKAAGTDKLVGLVMEAKGVLRTGMPVFFTDADGVEQQGAITSGTFSPTLGYSIAMARVPNSVGDVAEVEMRKKRVPVKVIAPSFVRNGKQAF.

It belongs to the GcvT family. The glycine cleavage system is composed of four proteins: P, T, L and H.

It carries out the reaction N(6)-[(R)-S(8)-aminomethyldihydrolipoyl]-L-lysyl-[protein] + (6S)-5,6,7,8-tetrahydrofolate = N(6)-[(R)-dihydrolipoyl]-L-lysyl-[protein] + (6R)-5,10-methylene-5,6,7,8-tetrahydrofolate + NH4(+). Its function is as follows. The glycine cleavage system catalyzes the degradation of glycine. This chain is Aminomethyltransferase, found in Shewanella loihica (strain ATCC BAA-1088 / PV-4).